The following is a 462-amino-acid chain: Threonine--tRNA ligase, mitochondrial (462 aa).

The N-terminal 45 residues, 1–45 (MKIQLVRWHCSRNALWNRAFYSTRKATKNASSATPATMTSMVSQR), are a transit peptide targeting the mitochondrion.

This sequence belongs to the class-II aminoacyl-tRNA synthetase family.

The protein localises to the mitochondrion matrix. It carries out the reaction tRNA(Thr) + L-threonine + ATP = L-threonyl-tRNA(Thr) + AMP + diphosphate + H(+). This chain is Threonine--tRNA ligase, mitochondrial (MST1), found in Saccharomyces cerevisiae (strain ATCC 204508 / S288c) (Baker's yeast).